Consider the following 361-residue polypeptide: Porphobilinogen deaminase (361 aa).

The residue at position 2 (Ser2) is an N-acetylserine. Phosphoserine is present on Ser69. N6-acetyllysine is present on Lys74. Ser147 bears the Phosphoserine mark. Cys261 carries the post-translational modification S-(dipyrrolylmethanemethyl)cysteine.

It belongs to the HMBS family. Monomer. It depends on dipyrromethane as a cofactor.

The protein localises to the cytoplasm. It is found in the cytosol. The catalysed reaction is 4 porphobilinogen + H2O = hydroxymethylbilane + 4 NH4(+). Its pathway is porphyrin-containing compound metabolism; protoporphyrin-IX biosynthesis; coproporphyrinogen-III from 5-aminolevulinate: step 2/4. Its function is as follows. As part of the heme biosynthetic pathway, catalyzes the sequential polymerization of four molecules of porphobilinogen to form hydroxymethylbilane, also known as preuroporphyrinogen. Catalysis begins with the assembly of the dipyrromethane cofactor by the apoenzyme from two molecules of porphobilinogen or from preuroporphyrinogen. The covalently linked cofactor acts as a primer, around which the tetrapyrrole product is assembled. In the last step of catalysis, the product, preuroporphyrinogen, is released, leaving the cofactor bound to the holodeaminase intact. This is Porphobilinogen deaminase (Hmbs) from Rattus norvegicus (Rat).